Reading from the N-terminus, the 239-residue chain is 2,3,4,5-tetrahydropyridine-2,6-dicarboxylate N-acetyltransferase (239 aa).

Belongs to the transferase hexapeptide repeat family. DapH subfamily.

It carries out the reaction (S)-2,3,4,5-tetrahydrodipicolinate + acetyl-CoA + H2O = L-2-acetamido-6-oxoheptanedioate + CoA. It functions in the pathway amino-acid biosynthesis; L-lysine biosynthesis via DAP pathway; LL-2,6-diaminopimelate from (S)-tetrahydrodipicolinate (acetylase route): step 1/3. Functionally, catalyzes the transfer of an acetyl group from acetyl-CoA to tetrahydrodipicolinate. The polypeptide is 2,3,4,5-tetrahydropyridine-2,6-dicarboxylate N-acetyltransferase (Staphylococcus haemolyticus (strain JCSC1435)).